A 259-amino-acid polypeptide reads, in one-letter code: 3-methyl-2-oxobutanoate hydroxymethyltransferase (259 aa).

Mg(2+) is bound by residues aspartate 44 and aspartate 83. 3-methyl-2-oxobutanoate contacts are provided by residues 44–45 (DS), aspartate 83, and lysine 113. Residue glutamate 115 coordinates Mg(2+). The Proton acceptor role is filled by glutamate 183.

Belongs to the PanB family. As to quaternary structure, homodecamer; pentamer of dimers. It depends on Mg(2+) as a cofactor.

The protein localises to the cytoplasm. The catalysed reaction is 3-methyl-2-oxobutanoate + (6R)-5,10-methylene-5,6,7,8-tetrahydrofolate + H2O = 2-dehydropantoate + (6S)-5,6,7,8-tetrahydrofolate. It participates in cofactor biosynthesis; (R)-pantothenate biosynthesis; (R)-pantoate from 3-methyl-2-oxobutanoate: step 1/2. Functionally, catalyzes the reversible reaction in which hydroxymethyl group from 5,10-methylenetetrahydrofolate is transferred onto alpha-ketoisovalerate to form ketopantoate. This Acaryochloris marina (strain MBIC 11017) protein is 3-methyl-2-oxobutanoate hydroxymethyltransferase.